The sequence spans 748 residues: Cysteine--tRNA ligase, cytoplasmic (748 aa).

Residues 1–25 (MADSSGQQGKGRRVQPQWSPPAGTQ) form a disordered region. A2 bears the N-acetylalanine mark. Residue S19 is modified to Phosphoserine. Residue C55 participates in Zn(2+) binding. G56 serves as a coordination point for L-cysteine. The 'HIGH' region motif lies at 57–67 (PTVYDASHMGH). R79 is modified (phosphoserine). Position 96 (T96) interacts with L-cysteine. The 'KIIK' region motif lies at 101–104 (KIIK). A phosphoserine mark is found at S305 and S307. Positions 348, 373, and 377 each coordinate Zn(2+). H373 contributes to the L-cysteine binding site. Positions 406-410 (KMSKS) match the 'KMSKS' region motif. ATP is bound at residue K409. Residue K503 is modified to N6-acetyllysine. Residues 653-679 (EKRRVEEEKRKKKEEAARRKQEQEAAK) show a composition bias toward basic and acidic residues. Residues 653 to 686 (EKRRVEEEKRKKKEEAARRKQEQEAAKLAKMKIP) form a disordered region. The residue at position 746 (S746) is a Phosphoserine.

It belongs to the class-I aminoacyl-tRNA synthetase family. In terms of assembly, homodimer. Zn(2+) serves as cofactor.

It localises to the cytoplasm. It carries out the reaction tRNA(Cys) + L-cysteine + ATP = L-cysteinyl-tRNA(Cys) + AMP + diphosphate. Its function is as follows. Catalyzes the ATP-dependent ligation of cysteine to tRNA(Cys). In Homo sapiens (Human), this protein is Cysteine--tRNA ligase, cytoplasmic.